The sequence spans 364 residues: Coproporphyrin III ferrochelatase (364 aa).

Fe-coproporphyrin III-binding residues include R29 and Y118. Residues H169 and E250 each coordinate Fe(2+).

The protein belongs to the ferrochelatase family.

The protein localises to the cytoplasm. The enzyme catalyses Fe-coproporphyrin III + 2 H(+) = coproporphyrin III + Fe(2+). It functions in the pathway porphyrin-containing compound metabolism; protoheme biosynthesis. Functionally, involved in coproporphyrin-dependent heme b biosynthesis. Catalyzes the insertion of ferrous iron into coproporphyrin III to form Fe-coproporphyrin III. This is Coproporphyrin III ferrochelatase from Streptococcus pneumoniae serotype 2 (strain D39 / NCTC 7466).